The sequence spans 407 residues: Phosphopentomutase (407 aa).

Mn(2+)-binding residues include Asp10, Asp306, His311, Asp347, His348, and His359.

Belongs to the phosphopentomutase family. Requires Mn(2+) as cofactor.

The protein localises to the cytoplasm. The catalysed reaction is 2-deoxy-alpha-D-ribose 1-phosphate = 2-deoxy-D-ribose 5-phosphate. It carries out the reaction alpha-D-ribose 1-phosphate = D-ribose 5-phosphate. The protein operates within carbohydrate degradation; 2-deoxy-D-ribose 1-phosphate degradation; D-glyceraldehyde 3-phosphate and acetaldehyde from 2-deoxy-alpha-D-ribose 1-phosphate: step 1/2. Functionally, isomerase that catalyzes the conversion of deoxy-ribose 1-phosphate (dRib-1-P) and ribose 1-phosphate (Rib-1-P) to deoxy-ribose 5-phosphate (dRib-5-P) and ribose 5-phosphate (Rib-5-P), respectively. In Pectobacterium carotovorum subsp. carotovorum (strain PC1), this protein is Phosphopentomutase.